A 207-amino-acid polypeptide reads, in one-letter code: Guanylate kinase (207 aa).

In terms of domain architecture, Guanylate kinase-like spans 4 to 184 (GTLYIVSAPS…ALMDFKAILR (181 aa)). ATP is bound at residue 11 to 18 (APSGAGKS).

It belongs to the guanylate kinase family.

The protein resides in the cytoplasm. It catalyses the reaction GMP + ATP = GDP + ADP. Essential for recycling GMP and indirectly, cGMP. In Vibrio parahaemolyticus serotype O3:K6 (strain RIMD 2210633), this protein is Guanylate kinase.